Reading from the N-terminus, the 217-residue chain is Probable transaldolase (217 aa).

The active-site Schiff-base intermediate with substrate is the Lys85.

Belongs to the transaldolase family. Type 3B subfamily.

It localises to the cytoplasm. It catalyses the reaction D-sedoheptulose 7-phosphate + D-glyceraldehyde 3-phosphate = D-erythrose 4-phosphate + beta-D-fructose 6-phosphate. The protein operates within carbohydrate degradation; pentose phosphate pathway; D-glyceraldehyde 3-phosphate and beta-D-fructose 6-phosphate from D-ribose 5-phosphate and D-xylulose 5-phosphate (non-oxidative stage): step 2/3. Transaldolase is important for the balance of metabolites in the pentose-phosphate pathway. This chain is Probable transaldolase, found in Lachnoclostridium phytofermentans (strain ATCC 700394 / DSM 18823 / ISDg) (Clostridium phytofermentans).